Consider the following 424-residue polypeptide: Steryl acetyl hydrolase 1 (424 aa).

Ala-2 carries the post-translational modification N-acetylalanine. Over 2-45 the chain is Cytoplasmic; sequence AANSGLDSKVEYYRLQENEIISAVSSEDADQNDAGFRLSTIHLH. A helical; Signal-anchor for type II membrane protein transmembrane segment spans residues 46-66; sequence LFHGLKFAALLFTVVPVFIIL. The Lumenal segment spans residues 67-424; that stretch reads DSMKIIFQRK…IARILEFMQS (358 aa). Residue Asn-85 is glycosylated (N-linked (GlcNAc...) asparagine). The Involved in the stabilization of the negatively charged intermediate by the formation of the oxyanion hole motif lies at 176–178; that stretch reads HGG. Ser-250 is an active-site residue. Asn-283 carries N-linked (GlcNAc...) asparagine glycosylation. His-395 is an active-site residue. N-linked (GlcNAc...) asparagine glycosylation occurs at Asn-401.

It belongs to the 'GDXG' lipolytic enzyme family.

The protein resides in the endoplasmic reticulum membrane. Functionally, required for the deacetylation of acetylated sterols. Involved in the resistance to eugenol and pregnenolone toxicity. The sequence is that of Steryl acetyl hydrolase 1 (SAY1) from Saccharomyces cerevisiae (strain ATCC 204508 / S288c) (Baker's yeast).